Reading from the N-terminus, the 306-residue chain is Aspartate carbamoyltransferase catalytic subunit (306 aa).

Carbamoyl phosphate contacts are provided by R51 and T52. K79 serves as a coordination point for L-aspartate. Positions 101, 129, and 132 each coordinate carbamoyl phosphate. The L-aspartate site is built by R162 and R213. 2 residues coordinate carbamoyl phosphate: A254 and P255.

The protein belongs to the aspartate/ornithine carbamoyltransferase superfamily. ATCase family. In terms of assembly, heterododecamer (2C3:3R2) of six catalytic PyrB chains organized as two trimers (C3), and six regulatory PyrI chains organized as three dimers (R2).

It catalyses the reaction carbamoyl phosphate + L-aspartate = N-carbamoyl-L-aspartate + phosphate + H(+). It functions in the pathway pyrimidine metabolism; UMP biosynthesis via de novo pathway; (S)-dihydroorotate from bicarbonate: step 2/3. Functionally, catalyzes the condensation of carbamoyl phosphate and aspartate to form carbamoyl aspartate and inorganic phosphate, the committed step in the de novo pyrimidine nucleotide biosynthesis pathway. This Bacillus thuringiensis (strain Al Hakam) protein is Aspartate carbamoyltransferase catalytic subunit.